We begin with the raw amino-acid sequence, 695 residues long: Probable serine/threonine-protein kinase DDB_G0279405 (695 aa).

Disordered regions lie at residues Ile119 to Gln138 and Gln149 to Lys192. A compositionally biased stretch (pro residues) spans Gln124–Gln138. Residues Gln149–Gln160 show a composition bias toward low complexity. Positions Phe161 to Gly173 are enriched in polar residues. A Protein kinase domain is found at Tyr201–Thr462. Residues Leu207–Val215 and Lys230 contribute to the ATP site. Asp329 serves as the catalytic Proton acceptor. The tract at residues Thr491–Ser580 is disordered. Residues Leu510–Ser528 are compositionally biased toward low complexity. Over residues Lys529–Ile541 the composition is skewed to polar residues. Over residues Gln542–Ser580 the composition is skewed to low complexity.

Belongs to the protein kinase superfamily. Ser/Thr protein kinase family.

The enzyme catalyses L-seryl-[protein] + ATP = O-phospho-L-seryl-[protein] + ADP + H(+). It catalyses the reaction L-threonyl-[protein] + ATP = O-phospho-L-threonyl-[protein] + ADP + H(+). This Dictyostelium discoideum (Social amoeba) protein is Probable serine/threonine-protein kinase DDB_G0279405.